The sequence spans 150 residues: Regulatory protein RecX (150 aa).

This sequence belongs to the RecX family.

Its subcellular location is the cytoplasm. Functionally, modulates RecA activity. The protein is Regulatory protein RecX of Legionella pneumophila (strain Corby).